Here is a 225-residue protein sequence, read N- to C-terminus: Phosphoserine phosphatase (225 aa).

At M1 the chain carries N-acetylmethionine. The active-site Nucleophile is D20. Mg(2+) contacts are provided by D20 and D22. Residue D20–D22 coordinates L-serine. D22 acts as the Proton donor in catalysis. M52 contributes to the O-phospho-L-serine binding site. Position 53 (G53) interacts with phosphate. Residues S109–G111 and K158 contribute to the L-serine site. O-phospho-L-serine is bound by residues S109 to G111 and K158. D179 lines the Mg(2+) pocket. Residue T182 coordinates O-phospho-L-serine. Phosphate is bound at residue T182.

This sequence belongs to the HAD-like hydrolase superfamily. SerB family. Homodimer. Mg(2+) is required as a cofactor.

The protein localises to the cytoplasm. It is found in the cytosol. It carries out the reaction O-phospho-L-serine + H2O = L-serine + phosphate. The catalysed reaction is O-phospho-D-serine + H2O = D-serine + phosphate. The protein operates within amino-acid biosynthesis; L-serine biosynthesis; L-serine from 3-phospho-D-glycerate: step 3/3. In terms of biological role, catalyzes the last irreversible step in the biosynthesis of L-serine from carbohydrates, the dephosphorylation of O-phospho-L-serine to L-serine. L-serine can then be used in protein synthesis, to produce other amino acids, in nucleotide metabolism or in glutathione synthesis, or can be racemized to D-serine, a neuromodulator. May also act on O-phospho-D-serine. This Mus musculus (Mouse) protein is Phosphoserine phosphatase.